A 207-amino-acid polypeptide reads, in one-letter code: MTFVENRIYLASRSPRRQELLKQIGVDFMVLPLREALPRIPDVDETPLPQESPPEYVERIARVKAETGRKRMSERGWADFPVLGADTAVVLNGRIFGKPENPLHAKQMLRALSGQIHEVLTAAAVAAGNGTRVCLSRSSVRFRNLGEQEIDHYLACDEAYDKAGAYAIQGRAAVFISGISGSYSGVVGLPLFETAQLLEESAIRIFQ.

The active-site Proton acceptor is aspartate 86.

The protein belongs to the Maf family. YhdE subfamily. Requires a divalent metal cation as cofactor.

Its subcellular location is the cytoplasm. The catalysed reaction is dTTP + H2O = dTMP + diphosphate + H(+). It catalyses the reaction UTP + H2O = UMP + diphosphate + H(+). Nucleoside triphosphate pyrophosphatase that hydrolyzes dTTP and UTP. May have a dual role in cell division arrest and in preventing the incorporation of modified nucleotides into cellular nucleic acids. This is dTTP/UTP pyrophosphatase from Nitrosospira multiformis (strain ATCC 25196 / NCIMB 11849 / C 71).